A 199-amino-acid polypeptide reads, in one-letter code: 7-methyl-GTP pyrophosphatase (199 aa).

D73 acts as the Proton acceptor in catalysis.

It belongs to the Maf family. YceF subfamily. A divalent metal cation serves as cofactor.

It is found in the cytoplasm. The catalysed reaction is N(7)-methyl-GTP + H2O = N(7)-methyl-GMP + diphosphate + H(+). Its function is as follows. Nucleoside triphosphate pyrophosphatase that hydrolyzes 7-methyl-GTP (m(7)GTP). May have a dual role in cell division arrest and in preventing the incorporation of modified nucleotides into cellular nucleic acids. This is 7-methyl-GTP pyrophosphatase from Bordetella bronchiseptica (strain ATCC BAA-588 / NCTC 13252 / RB50) (Alcaligenes bronchisepticus).